Reading from the N-terminus, the 249-residue chain is uncharacterized protein (249 aa).

Polar residues-rich tracts occupy residues 66–79 (NASL…TISP) and 92–119 (ASGS…SSSE). The tract at residues 66 to 142 (NASLESGQSS…GPTSPRVTPG (77 aa)) is disordered.

Its subcellular location is the plastid. The protein resides in the chloroplast. This is an uncharacterized protein from Chlorella vulgaris (Green alga).